Consider the following 198-residue polypeptide: Transcription factor FapR (198 aa).

Positions 102–168 (TRIARGHHLF…GRTVVDVNSY (67 aa)) constitute a MaoC-like domain.

The protein belongs to the FapR family.

Functionally, transcriptional factor involved in regulation of membrane lipid biosynthesis by repressing genes involved in fatty acid and phospholipid metabolism. The protein is Transcription factor FapR of Geobacillus thermodenitrificans (strain NG80-2).